Consider the following 245-residue polypeptide: 5-oxoprolinase subunit A (245 aa).

It belongs to the LamB/PxpA family. As to quaternary structure, forms a complex composed of PxpA, PxpB and PxpC.

The catalysed reaction is 5-oxo-L-proline + ATP + 2 H2O = L-glutamate + ADP + phosphate + H(+). Catalyzes the cleavage of 5-oxoproline to form L-glutamate coupled to the hydrolysis of ATP to ADP and inorganic phosphate. This Serratia proteamaculans (strain 568) protein is 5-oxoprolinase subunit A.